Here is a 319-residue protein sequence, read N- to C-terminus: L-tryptophan isonitrile synthase AmbI1 (319 aa).

The protein belongs to the isocyanide synthase family.

The enzyme catalyses D-ribulose 5-phosphate + L-tryptophan = (2S)-3-(1H-indol-3-yl)-2-isocyanopropanoate + hydroxyacetone + formaldehyde + phosphate + H2O + H(+). Involved in the biosynthesis of ambiguines, a family of hapalindole-type alkaloids. Responsible for the synthesis of the isonitrile group on tryptophan using ribulose 5-phosphate as the source of the carbon atom. The polypeptide is L-tryptophan isonitrile synthase AmbI1 (Fischerella ambigua (strain UTEX 1903)).